The primary structure comprises 271 residues: Solute carrier family 66 member 2 (271 aa).

3 helical membrane passes run 8-28 (WLLV…MVFG), 49-69 (FSTY…LFWF), and 76-96 (PLLW…KLCT). Residues 14 to 80 (HQLVSWGAAA…RRFESPLLWQ (67 aa)) form the PQ-loop 1 domain. At S110 the chain carries Phosphoserine. Transmembrane regions (helical) follow at residues 145–165 (DYVQ…YLSI), 168–188 (ALFV…LGVP), and 232–252 (VCGL…YAFA). Residues 178–233 (AVLTEAMLGVPQLYRNHRHQSTEGMSIKMVLMWTSGDAFKTAYFLLKGAPLQFSVC) form the PQ-loop 2 domain.

The protein resides in the membrane. This is Solute carrier family 66 member 2 from Homo sapiens (Human).